A 288-amino-acid chain; its full sequence is Protease HtpX (288 aa).

The next 2 helical transmembrane spans lie at Ile-5 to Leu-25 and Gly-35 to Ser-55. His-140 is a Zn(2+) binding site. Glu-141 is an active-site residue. His-144 contributes to the Zn(2+) binding site. The next 2 membrane-spanning stretches (helical) occupy residues Leu-155–Ile-175 and Ile-194–Phe-214. Position 219 (Glu-219) interacts with Zn(2+).

It belongs to the peptidase M48B family. Zn(2+) serves as cofactor.

It localises to the cell inner membrane. This Stenotrophomonas maltophilia (strain K279a) protein is Protease HtpX.